We begin with the raw amino-acid sequence, 2327 residues long: Kielin/chordin-like protein (2327 aa).

An N-terminal signal peptide occupies residues 1–19; it reads MNTLLWTILLPLLFSFCVC. The segment at 250–294 is disordered; it reads LPLPYSLSGERQMEDEEIQREPRAPDLSDTDHYQQQQSEVPAQLL. Positions 268 to 281 are enriched in basic and acidic residues; that stretch reads QREPRAPDLSDTDH. Residues 291 to 332 are a coiled coil; the sequence is AQLLAKDDRLQRLEEAVKGLTNMIDMIKSQNADLQARVIALE. 28 consecutive VWFC domains span residues 339–400, 401–438, 439–493, 494–553, 554–610, 611–669, 670–728, 729–786, 787–847, 848–907, 908–966, 967–1025, 1026–1083, 1084–1142, 1146–1203, 1204–1260, 1261–1319, 1321–1377, 1378–1439, 1440–1495, 1496–1555, 1556–1614, 1615–1673, 1674–1731, 1732–1799, 1800–1860, 1861–1924, and 1928–1988; these read STCV…SVGP, CMSC…PLCA, TGCS…AKCQ, QGCE…PSCP, VCEL…LDCS, ACEM…SQCQ, SCMD…PMCD, GCLY…PRCE, GCEY…PSCD, VCDF…PVCK, VCVQ…PVCD, SCSY…AKCP, DCRY…NNCN, GCNY…PQCP, ADCP…RSCD, GCLM…KECQ, DCQY…PVCD, CSYN…CPIC, QGCH…DGCN, YSGR…PRCT, GICK…PVCD, RCFY…RECP, VCRY…PRCR, GCVY…PVCA, DCIS…SSCA, QALS…PVCN, ECVV…HECQ, and VSCW…PHCI. One can recognise a VWFD domain in the interval 1992–2168; that stretch reads ATCIAFGDPH…SSNDSSSSCW (177 aa). 2 disulfide bridges follow: Cys1994-Cys2126 and Cys2016-Cys2167. Positions 2259–2319 constitute a TIL domain; sequence CPHDRGYVFD…ESHCIPPESC (61 aa).

The protein localises to the secreted. May be a signaling molecule that mediates inductive activities of the embryonic midline. Able to dorsalize mesoderm. The polypeptide is Kielin/chordin-like protein (kcp) (Xenopus laevis (African clawed frog)).